Consider the following 143-residue polypeptide: Peptide methionine sulfoxide reductase B8 (143 aa).

A MsrB domain is found at 18–139 (DEEWRAVLSP…NSVSLKFASA (122 aa)). Zn(2+) is bound by residues cysteine 57, cysteine 60, cysteine 103, and cysteine 106. The cysteines at positions 75 and 128 are disulfide-linked. The Nucleophile role is filled by cysteine 128.

It belongs to the MsrB Met sulfoxide reductase family. Requires Zn(2+) as cofactor.

It is found in the cytoplasm. Its subcellular location is the cytosol. It carries out the reaction L-methionyl-[protein] + [thioredoxin]-disulfide + H2O = L-methionyl-(R)-S-oxide-[protein] + [thioredoxin]-dithiol. In terms of biological role, catalyzes the reduction of methionine sulfoxide (MetSO) to methionine in proteins. Plays a protective role against oxidative stress by restoring activity to proteins that have been inactivated by methionine oxidation. MSRB family specifically reduces the MetSO R-enantiomer. The protein is Peptide methionine sulfoxide reductase B8 (MSRB8) of Arabidopsis thaliana (Mouse-ear cress).